Here is a 157-residue protein sequence, read N- to C-terminus: SsrA-binding protein (157 aa).

Positions His-133–Arg-157 are disordered.

It belongs to the SmpB family.

Its subcellular location is the cytoplasm. Functionally, required for rescue of stalled ribosomes mediated by trans-translation. Binds to transfer-messenger RNA (tmRNA), required for stable association of tmRNA with ribosomes. tmRNA and SmpB together mimic tRNA shape, replacing the anticodon stem-loop with SmpB. tmRNA is encoded by the ssrA gene; the 2 termini fold to resemble tRNA(Ala) and it encodes a 'tag peptide', a short internal open reading frame. During trans-translation Ala-aminoacylated tmRNA acts like a tRNA, entering the A-site of stalled ribosomes, displacing the stalled mRNA. The ribosome then switches to translate the ORF on the tmRNA; the nascent peptide is terminated with the 'tag peptide' encoded by the tmRNA and targeted for degradation. The ribosome is freed to recommence translation, which seems to be the essential function of trans-translation. The chain is SsrA-binding protein from Verminephrobacter eiseniae (strain EF01-2).